A 540-amino-acid chain; its full sequence is MSLESLTVQTKYGPVRGKRNVSLLGQEYVSFQGIPYARAPEGELRFKAPVPPQKWTETLDCTQQCEPCYHFDRRLQKIVGCEDSLKINVFAKEINPSTPLPVMLYIYGGGFTEGTSGTELYGPDFLVQKDIVLVSFNYRIGALGFLCCQSEQDGVPGNAGLKDQNLAIRWVLENIAAFGGDPKRVTLAGHSAGAASVQYHLISDASKDLFQRRIVMSGSTYSSWSLTRQRNWVEKLAKAIGWDGQGGESGALRFLRRAKPEDIVAHQEKLLTDQDMQDDIFTPFGPTVEPYLTEQCIIPKAPFEMARTAWGDKIDIMIGGTSEEGLLLLQKIKLHPELLSHPHLFLGNVPPNLKISMEKRIEFAAKLKQRYYPDSIPSMENNLGYVHMMSDRVFWHGLHRTILARAARSRARTFVYRICLDSEFYNHYRIMMIDPKLRGTAHADELSYLFSNFTQQVPGKETFEYRGLQTLVDVFSAFVINGDPNCGMTAKGGVVFEPNAQTKPTFKCLNIANDGVAFVDYPDADRLDMWDAMYVNDELF.

The cysteines at positions 68 and 81 are disulfide-linked. S191 serves as the catalytic Acyl-ester intermediate. Active-site charge relay system residues include E324 and H442. An N-linked (GlcNAc...) asparagine glycan is attached at N452.

This sequence belongs to the type-B carboxylesterase/lipase family.

It catalyses the reaction a carboxylic ester + H2O = an alcohol + a carboxylate + H(+). Its function is as follows. Overproduction of nonspecific esterases is a common mechanism of resistance to organophosphate insecticides. In Culex pipiens (House mosquito), this protein is Esterase B1 (B1).